The following is a 74-amino-acid chain: Conotoxin AbVII (74 aa).

The N-terminal stretch at 1–17 (VLIIAVLFLTACQLTTA) is a signal peptide. Positions 18–40 (ETSSRGKQKHRALRSTDKNSRMT) are excised as a propeptide. Positions 19 to 41 (TSSRGKQKHRALRSTDKNSRMTK) are disordered. Intrachain disulfides connect Cys43–Cys57, Cys50–Cys61, and Cys56–Cys68.

This sequence belongs to the conotoxin O1 superfamily. As to expression, expressed by the venom duct.

The protein resides in the secreted. The protein is Conotoxin AbVII of Conus abbreviatus (Abbreviated cone).